Consider the following 3898-residue polypeptide: Genome polyprotein (3898 aa).

In terms of domain architecture, Peptidase C53 spans M1–C168. Disordered stretches follow at residues L47–G72, K172–D209, and K223–E245. Residues H49 and C69 each act as for N-terminal protease activity in the active site. Basic and acidic residues predominate over residues K172 to P207. 4 N-linked (GlcNAc...) asparagine; by host glycosylation sites follow: N272, N281, N296, and N335. Disulfide bonds link C308–C352 and C338–C339. Active-site for E(rns) glycoprotein RNase activity residues include H344, E345, K348, and H349. N-linked (GlcNAc...) asparagine; by host glycans are attached at residues N365 and N370. Disulfide bonds link C380–C425 and C384–C408. N413, N487, and N597 each carry an N-linked (GlcNAc...) asparagine; by host glycan. Residues A498–L666 lie on the Lumenal side of the membrane. Residues V667 to I687 traverse the membrane as a helical segment. The Lumenal segment spans residues T688–S1035. 2 disulfide bridges follow: C696–C740 and C751–C798. 4 N-linked (GlcNAc...) asparagine; by host glycosylation sites follow: N809, N878, N922, and N990. The next 8 helical transmembrane spans lie at I1036–Y1056, N1079–L1099, V1108–L1128, L1144–A1164, P1189–T1209, W1217–L1237, I1247–T1267, and V1281–L1301. A glycan (N-linked (GlcNAc...) asparagine; by host) is linked at N1357. The helical transmembrane segment at M1360 to I1380 threads the bilayer. N-linked (GlcNAc...) asparagine; by host glycosylation occurs at N1419. Positions R1441–R1589 constitute a Peptidase C74 domain. Catalysis depends on H1447, which acts as the For cysteine protease NS2 activity. A glycan (N-linked (GlcNAc...) asparagine; by host) is linked at N1451. Residues E1461 and C1512 each act as for cysteine protease NS2 activity in the active site. The chain crosses the membrane as a helical span at residues M1568 to L1588. Residues G1590–R1763 form the Peptidase S31 domain. Residues H1658 and D1695 each act as charge relay system; for serine protease NS3 activity in the active site. N1713 carries N-linked (GlcNAc...) asparagine; by host glycosylation. S1752 functions as the Charge relay system; for serine protease NS3 activity in the catalytic mechanism. One can recognise a Helicase ATP-binding domain in the interval I1802–A1960. L1815–T1822 is a binding site for ATP. Positions D1910–H1913 match the DEAH box motif. Positions G1978–N2143 constitute a Helicase C-terminal domain. N-linked (GlcNAc...) asparagine; by host glycosylation is found at N2134, N2217, N2494, N2682, N2751, N2891, and N2988. Positions 3499 and 3501 each coordinate GTP. Residues P3518 to F3641 enclose the RdRp catalytic domain. N3688 is a glycosylation site (N-linked (GlcNAc...) asparagine; by host). GTP-binding residues include R3696 and K3704. 2 N-linked (GlcNAc...) asparagine; by host glycosylation sites follow: N3777 and N3793.

Belongs to the pestivirus polyprotein family. As to quaternary structure, homodimer; disulfide-linked. Homodimer; disulfide-linked. Heterodimer with E1; disulfide-linked. In terms of assembly, interacts with host IFIH1/MDA5; this interaction is involved in the inhibition of IFN-beta production. Post-translationally, heavily glycosylated. The viral RNA of pestiviruses is expressed as a single polyprotein which undergoes post-translational proteolytic processing resulting in the production of at least eleven individual proteins. The N-terminal protease cleaves itself from the nascent polyprotein autocatalytically and thereby generates the N-terminus of the adjacent viral capsid protein C. In terms of processing, cleavage between E2 and p7 is partial.

It localises to the virion. It is found in the host membrane. The protein localises to the virion membrane. Its subcellular location is the host endoplasmic reticulum membrane. The protein resides in the host cytoplasm. The enzyme catalyses Leu is conserved at position P1 for all four cleavage sites. Alanine is found at position P1' of the NS4A-NS4B cleavage site, whereas serine is found at position P1' of the NS3-NS4A, NS4B-NS5A and NS5A-NS5B cleavage sites.. It catalyses the reaction RNA(n) + a ribonucleoside 5'-triphosphate = RNA(n+1) + diphosphate. The catalysed reaction is a ribonucleoside 5'-triphosphate + H2O = a ribonucleoside 5'-diphosphate + phosphate + H(+). It carries out the reaction ATP + H2O = ADP + phosphate + H(+). The enzyme catalyses a ribonucleotidyl-ribonucleotide-RNA + H2O = a 3'-end 3'-phospho-ribonucleotide-RNA + a 5'-end dephospho-ribonucleoside-RNA + H(+). It catalyses the reaction a ribonucleotidyl-ribonucleotide-RNA = a 3'-end 2',3'-cyclophospho-ribonucleotide-RNA + a 5'-end dephospho-ribonucleoside-RNA. The catalysed reaction is a 3'-end 2',3'-cyclophospho-ribonucleotide-RNA + H2O = a 3'-end 3'-phospho-ribonucleotide-RNA + H(+). With respect to regulation, inhibited by Zn(2+), which binds the catalytic site. Its function is as follows. Leader cysteine autoprotease that cleaves itself from the nascent polyprotein during translation of the viral mRNA. Once released, plays a role in the inhibition of host innate immune response by interacting with host IRF3 and inducing its proteasomal degradation. Packages viral RNA to form a viral nucleocapsid and thereby protects viral RNA. Also plays a role in transcription regulation. Protects the incoming virus against IFN-induced effectors. In terms of biological role, initial binding to target cell probably involves interaction of E(rns) with glycosaminoglycans. Also possesses intrinsic ribonuclease (RNase) activity that can inhibit the production of type I interferon and assist in the development of persistent infections. Functionally, E1 and/or E2 are probably responsible of cell attachment with CD46 and subsequent fusion after internalization of the virion by endocytosis. Its function is as follows. E1 and/or E2 are probably responsible of cell attachment with CD46 and subsequent fusion after internalization of the virion by endocytosis. Probably functions as a coeffector of fusion providing structural integrity to the fusion complex and possibly controlling exposure of the fusion motif in E1. Plays an essential role in the virus replication cycle by acting as a viroporin. Forms ion conductive pores, which alters the cell permeability allowing the transport of ions and other small molecules. Forms a leader sequence to properly orient NS2 in the membrane. In terms of biological role, uncleaved NS2-3 is required for production of infectious virus. Functionally, plays a role in the regulation of viral RNA replication. Its function is as follows. Multifunctional protein that contains an N-terminal protease and a C-terminal helicase, playing essential roles in viral polyprotein processing and viral genome replication. The chymotrypsin-like serine protease activity utilizes NS4A as an essential cofactor and catalyzes the cleavage of the polyprotein leading to the release of NS4A, NS4B, NS5A, and NS5B. Interacts with NS5B to enhance RNA-dependent RNA polymerase activity. Acts as a cofactor for the NS3 protease activity. In terms of biological role, induces a specific membrane alteration that serves as a scaffold for the virus replication complex. Plays a role in the inhibition of host innate immune response by inhibiting RIGI/IFIH1-mediated IFN-beta production. Functionally, replicates the viral (+) and (-) genome. Initiates the primer-independent RNA replication via a de novo mechanism requiring GTP. In Bos taurus (Bovine), this protein is Genome polyprotein.